We begin with the raw amino-acid sequence, 307 residues long: UDP-N-acetylenolpyruvoylglucosamine reductase (307 aa).

An FAD-binding PCMH-type domain is found at 33–197 (TGGNADFYIT…LEAAFTLAPG (165 aa)). Arginine 176 is a catalytic residue. The active-site Proton donor is serine 226. Glutamate 296 is a catalytic residue.

It belongs to the MurB family. FAD is required as a cofactor.

It is found in the cytoplasm. The enzyme catalyses UDP-N-acetyl-alpha-D-muramate + NADP(+) = UDP-N-acetyl-3-O-(1-carboxyvinyl)-alpha-D-glucosamine + NADPH + H(+). It functions in the pathway cell wall biogenesis; peptidoglycan biosynthesis. In terms of biological role, cell wall formation. This is UDP-N-acetylenolpyruvoylglucosamine reductase from Staphylococcus aureus (strain Mu3 / ATCC 700698).